We begin with the raw amino-acid sequence, 165 residues long: Xanthine-guanine phosphoribosyltransferase (165 aa).

5-phospho-alpha-D-ribose 1-diphosphate is bound by residues 41-42 (RG) and 98-106 (DDLTDTGKT). Asp-99 provides a ligand contact to Mg(2+). Guanine contacts are provided by Asp-102 and Ile-145. Residues Asp-102 and Ile-145 each contribute to the xanthine site. Residues 102–106 (DTGKT) and 144–145 (WI) contribute to the GMP site.

This sequence belongs to the purine/pyrimidine phosphoribosyltransferase family. XGPT subfamily. In terms of assembly, homotetramer. It depends on Mg(2+) as a cofactor.

Its subcellular location is the cell inner membrane. The enzyme catalyses GMP + diphosphate = guanine + 5-phospho-alpha-D-ribose 1-diphosphate. The catalysed reaction is XMP + diphosphate = xanthine + 5-phospho-alpha-D-ribose 1-diphosphate. It carries out the reaction IMP + diphosphate = hypoxanthine + 5-phospho-alpha-D-ribose 1-diphosphate. Its pathway is purine metabolism; GMP biosynthesis via salvage pathway; GMP from guanine: step 1/1. It participates in purine metabolism; XMP biosynthesis via salvage pathway; XMP from xanthine: step 1/1. Functionally, purine salvage pathway enzyme that catalyzes the transfer of the ribosyl-5-phosphate group from 5-phospho-alpha-D-ribose 1-diphosphate (PRPP) to the N9 position of the 6-oxopurines guanine and xanthine to form the corresponding ribonucleotides GMP (guanosine 5'-monophosphate) and XMP (xanthosine 5'-monophosphate), with the release of PPi. To a lesser extent, also acts on hypoxanthine. This chain is Xanthine-guanine phosphoribosyltransferase, found in Brucella canis (strain ATCC 23365 / NCTC 10854 / RM-666).